The chain runs to 601 residues: ATP-dependent lipid A-core flippase (601 aa).

Helical transmembrane passes span 33-53 (CVAVVAMIAYAAITPFFAKLI), 72-92 (VSLMLIGLSVLRGIAGFLSEY), 158-178 (VIGLMALMVYQNPVLSLVFLV), 255-275 (LGGGVIHLISVAGVAGILYVV), and 283-303 (TITPGSLMAFIAAMAMMLSPI). Positions 34 to 315 (VAVVAMIAYA…LSQVVSVMQR (282 aa)) constitute an ABC transmembrane type-1 domain. Residues 347-583 (IEYRHVSLVY…RGGYADLYAM (237 aa)) enclose the ABC transporter domain. ATP is bound at residue 381-388 (GQSGSGKT).

It belongs to the ABC transporter superfamily. Lipid exporter (TC 3.A.1.106) family. Homodimer.

Its subcellular location is the cell inner membrane. It catalyses the reaction ATP + H2O + lipid A-core oligosaccharideSide 1 = ADP + phosphate + lipid A-core oligosaccharideSide 2.. Involved in lipopolysaccharide (LPS) biosynthesis. Translocates lipid A-core from the inner to the outer leaflet of the inner membrane. Transmembrane domains (TMD) form a pore in the inner membrane and the ATP-binding domain (NBD) is responsible for energy generation. The protein is ATP-dependent lipid A-core flippase of Methylococcus capsulatus (strain ATCC 33009 / NCIMB 11132 / Bath).